Reading from the N-terminus, the 148-residue chain is Large ribosomal subunit protein bL9 (148 aa).

The protein belongs to the bacterial ribosomal protein bL9 family.

Binds to the 23S rRNA. The sequence is that of Large ribosomal subunit protein bL9 from Bifidobacterium longum (strain DJO10A).